The chain runs to 28 residues: Apolipoprotein C-I (28 aa).

Belongs to the apolipoprotein C1 family.

The protein localises to the secreted. In terms of biological role, inhibitor of lipoprotein binding to the low density lipoprotein (LDL) receptor, LDL receptor-related protein, and very low density lipoprotein (VLDL) receptor. Associates with high density lipoproteins (HDL) and the triacylglycerol-rich lipoproteins in the plasma and makes up about 10% of the protein of the VLDL and 2% of that of HDL. Appears to interfere directly with fatty acid uptake and is also the major plasma inhibitor of cholesteryl ester transfer protein (CETP). Binds free fatty acids and reduces their intracellular esterification. Modulates the interaction of APOE with beta-migrating VLDL and inhibits binding of beta-VLDL to the LDL receptor-related protein. In Oryctolagus cuniculus (Rabbit), this protein is Apolipoprotein C-I (APOC1).